The following is a 427-amino-acid chain: 3-phosphoshikimate 1-carboxyvinyltransferase (427 aa).

Lysine 20, serine 21, and arginine 25 together coordinate 3-phosphoshikimate. Lysine 20 is a phosphoenolpyruvate binding site. Residues glycine 92 and arginine 120 each contribute to the phosphoenolpyruvate site. 3-phosphoshikimate is bound by residues serine 166, glutamine 168, aspartate 312, and lysine 339. Glutamine 168 serves as a coordination point for phosphoenolpyruvate. The active-site Proton acceptor is the aspartate 312. Phosphoenolpyruvate-binding residues include arginine 343 and arginine 385.

It belongs to the EPSP synthase family. As to quaternary structure, monomer.

Its subcellular location is the cytoplasm. The catalysed reaction is 3-phosphoshikimate + phosphoenolpyruvate = 5-O-(1-carboxyvinyl)-3-phosphoshikimate + phosphate. It functions in the pathway metabolic intermediate biosynthesis; chorismate biosynthesis; chorismate from D-erythrose 4-phosphate and phosphoenolpyruvate: step 6/7. In terms of biological role, catalyzes the transfer of the enolpyruvyl moiety of phosphoenolpyruvate (PEP) to the 5-hydroxyl of shikimate-3-phosphate (S3P) to produce enolpyruvyl shikimate-3-phosphate and inorganic phosphate. This is 3-phosphoshikimate 1-carboxyvinyltransferase from Streptococcus agalactiae serotype Ia (strain ATCC 27591 / A909 / CDC SS700).